The chain runs to 310 residues: D-alanine--D-alanine ligase (310 aa).

An ATP-grasp domain is found at 105-301; that stretch reads KQAFVSAGIL…FEELVERIIL (197 aa). 133–186 is a binding site for ATP; it reads SFGLPLVVKPVQEGSSVGISIVKEESQLAAAVKLAFRHDDEILVEQFIKGQEVQ. The Mg(2+) site is built by aspartate 254, glutamate 267, and asparagine 269.

Belongs to the D-alanine--D-alanine ligase family. Mg(2+) serves as cofactor. Requires Mn(2+) as cofactor.

The protein localises to the cytoplasm. The enzyme catalyses 2 D-alanine + ATP = D-alanyl-D-alanine + ADP + phosphate + H(+). It participates in cell wall biogenesis; peptidoglycan biosynthesis. Cell wall formation. This chain is D-alanine--D-alanine ligase, found in Pelobacter propionicus (strain DSM 2379 / NBRC 103807 / OttBd1).